Here is a 993-residue protein sequence, read N- to C-terminus: Replication protein 1a (993 aa).

The segment at 50–408 (RNALDVKDSE…TIVINGMAMQ (359 aa)) is methyltransferase. An Alphavirus-like MT domain is found at 72–289 (HLTQQEQAPH…HKWENVKSFL (218 aa)). Positions 525-581 (AEDRKQKAEAASQIPVDEIPDDTAESSDDTPREADTNQKSEPSSPELETLSTQTRSP) are disordered. Positions 542–552 (EIPDDTAESSD) are enriched in acidic residues. The span at 553 to 562 (DTPREADTNQ) shows a compositional bias: basic and acidic residues. Residues 564–576 (SEPSSPELETLST) are compositionally biased toward low complexity. Positions 682–838 (IVNADCVISN…TIIPDETDTA (157 aa)) constitute a (+)RNA virus helicase ATP-binding domain. Residues 711 to 975 (LVDGVAGCGK…VTRHKKTFRY (265 aa)) are ATP-dependent helicase. Position 714–721 (714–721 (GVAGCGKT)) interacts with ATP. Residues 839 to 993 (DTTFRSPQDV…DLIAECLARV (155 aa)) form the (+)RNA virus helicase C-terminal domain.

This sequence belongs to the bromoviridae replication protein 1a family. As to quaternary structure, interacts with RNA-directed RNA polymerase 2a.

It localises to the host endoplasmic reticulum membrane. Its function is as follows. Involved in the virus replication. Contains a helicase domain and a methyltransferase domain. The methyltransferase domain is probably involved in viral RNA capping. Involved in the formation of ER membrane spherular invaginations in which RNA replication complexes form. This Canna (Florist's daisy) protein is Replication protein 1a.